A 123-amino-acid polypeptide reads, in one-letter code: Small ribosomal subunit protein uS12cz/uS12cy (123 aa).

This sequence belongs to the universal ribosomal protein uS12 family. In terms of assembly, part of the 30S ribosomal subunit.

It localises to the plastid. Its subcellular location is the chloroplast. Functionally, with S4 and S5 plays an important role in translational accuracy. Located at the interface of the 30S and 50S subunits. The sequence is that of Small ribosomal subunit protein uS12cz/uS12cy (rps12-A) from Coffea arabica (Arabian coffee).